The sequence spans 249 residues: MSSIGTGYDLSVTTFSPDGRVFQIEYAAKAVDNSGTAVGIKCKDGIVLGVEKLIQSKMMLPGSNRRIHSVHRHSGMAVAGLAADGRQIVARAKSEATNYESVYGEAVPVKELADRVASYVHLCTLYWWLRPFGCGVILGGYDRDGPQLYMVEPSGISYRYFGAAIGKGKQAAKTEIEKLKLSEMTCREGIIEVAKIIYKVHDEAKDKAFELEMSWICDESKREHQKVPDNLLQEAKAAATAALEEMDAD.

The protein belongs to the peptidase T1A family. The 26S proteasome consists of a 20S proteasome core and two 19S regulatory subunits. The 20S proteasome core is composed of 28 subunits that are arranged in four stacked rings, resulting in a barrel-shaped structure. The two end rings are each formed by seven alpha subunits, and the two central rings are each formed by seven beta subunits. The catalytic chamber with the active sites is on the inside of the barrel.

It localises to the cytoplasm. It is found in the nucleus. The proteasome is a multicatalytic proteinase complex which is characterized by its ability to cleave peptides with Arg, Phe, Tyr, Leu, and Glu adjacent to the leaving group at neutral or slightly basic pH. The proteasome has an ATP-dependent proteolytic activity. In Spinacia oleracea (Spinach), this protein is Proteasome subunit alpha type-3 (PAG1).